The primary structure comprises 99 residues: Acylphosphatase (99 aa).

An Acylphosphatase-like domain is found at 5–97 (VRQVMIRGRV…RPGERFSQLP (93 aa)). Catalysis depends on residues R20 and N38.

This sequence belongs to the acylphosphatase family.

It catalyses the reaction an acyl phosphate + H2O = a carboxylate + phosphate + H(+). In Nitrobacter winogradskyi (strain ATCC 25391 / DSM 10237 / CIP 104748 / NCIMB 11846 / Nb-255), this protein is Acylphosphatase (acyP).